Here is a 271-residue protein sequence, read N- to C-terminus: Isoprenyl transferase (271 aa).

The active site involves Asp35. Asp35 is a binding site for Mg(2+). Substrate is bound by residues 36–39 (GNGR), Trp40, Arg48, His52, and 80–82 (STE). Asn83 functions as the Proton acceptor in the catalytic mechanism. Substrate is bound by residues Trp84, Arg86, Arg207, and 213-215 (RIS). Residue Glu226 coordinates Mg(2+).

This sequence belongs to the UPP synthase family. Homodimer. Mg(2+) is required as a cofactor.

In terms of biological role, catalyzes the condensation of isopentenyl diphosphate (IPP) with allylic pyrophosphates generating different type of terpenoids. In Enterococcus faecalis (strain ATCC 700802 / V583), this protein is Isoprenyl transferase.